The chain runs to 261 residues: tRNA pseudouridine synthase A (261 aa).

The active-site Nucleophile is D51. A substrate-binding site is contributed by Y109.

Belongs to the tRNA pseudouridine synthase TruA family. In terms of assembly, homodimer.

The enzyme catalyses uridine(38/39/40) in tRNA = pseudouridine(38/39/40) in tRNA. Functionally, formation of pseudouridine at positions 38, 39 and 40 in the anticodon stem and loop of transfer RNAs. This chain is tRNA pseudouridine synthase A, found in Shewanella denitrificans (strain OS217 / ATCC BAA-1090 / DSM 15013).